Reading from the N-terminus, the 216-residue chain is Urease accessory protein UreG (216 aa).

25–32 (GPVGSGKT) provides a ligand contact to GTP.

It belongs to the SIMIBI class G3E GTPase family. UreG subfamily. Homodimer. UreD, UreF and UreG form a complex that acts as a GTP-hydrolysis-dependent molecular chaperone, activating the urease apoprotein by helping to assemble the nickel containing metallocenter of UreC. The UreE protein probably delivers the nickel.

It localises to the cytoplasm. Its function is as follows. Facilitates the functional incorporation of the urease nickel metallocenter. This process requires GTP hydrolysis, probably effectuated by UreG. This Burkholderia mallei (strain NCTC 10247) protein is Urease accessory protein UreG.